Consider the following 451-residue polypeptide: AP-4 complex subunit mu (451 aa).

The region spanning 184–450 is the MHD domain; it reads REEIFVDIIE…VTQANSYVAR (267 aa).

This sequence belongs to the adaptor complexes medium subunit family. Adaptor protein complex 4 (AP-4) is a heterotetramer composed of two large adaptins (epsilon-type subunit and beta-type subunit), a medium adaptin (mu-type subunit) and a small adaptin (sigma-type subunit).

The protein resides in the golgi apparatus. The protein localises to the trans-Golgi network. It localises to the membrane. Its subcellular location is the coated pit. Its function is as follows. Subunit of novel type of clathrin- or non-clathrin-associated protein coat involved in targeting proteins from the trans-Golgi network (TGN) to the endosomal-lysosomal system. This chain is AP-4 complex subunit mu (AP4M), found in Arabidopsis thaliana (Mouse-ear cress).